The chain runs to 95 residues: MKKYEIMYILRPNLDNKYVKKINDTLQNVFLQAPNQILEQKEIGLKDLTYFIDNHKKGYYNWLMVKADNDAVLEFNRIVKITEEIIRFIVIKDKE.

This sequence belongs to the bacterial ribosomal protein bS6 family.

In terms of biological role, binds together with bS18 to 16S ribosomal RNA. This is Small ribosomal subunit protein bS6 from Aster yellows witches'-broom phytoplasma (strain AYWB).